The chain runs to 392 residues: Galactokinase (392 aa).

37–40 provides a ligand contact to substrate; that stretch reads EHTD. ATP contacts are provided by residues S71 and 128-134; that span reads GAGLSSS. Residues S134 and E166 each contribute to the Mg(2+) site. Catalysis depends on D178, which acts as the Proton acceptor. Y228 contributes to the substrate binding site.

This sequence belongs to the GHMP kinase family. GalK subfamily.

The protein resides in the cytoplasm. The enzyme catalyses alpha-D-galactose + ATP = alpha-D-galactose 1-phosphate + ADP + H(+). The protein operates within carbohydrate metabolism; galactose metabolism. Catalyzes the transfer of the gamma-phosphate of ATP to D-galactose to form alpha-D-galactose-1-phosphate (Gal-1-P). This chain is Galactokinase, found in Streptococcus pneumoniae serotype 4 (strain ATCC BAA-334 / TIGR4).